The chain runs to 236 residues: tRNA (guanine-N(1)-)-methyltransferase (236 aa).

S-adenosyl-L-methionine-binding positions include G113 and 133-138 (IGDYVL).

This sequence belongs to the RNA methyltransferase TrmD family. Homodimer.

Its subcellular location is the cytoplasm. It carries out the reaction guanosine(37) in tRNA + S-adenosyl-L-methionine = N(1)-methylguanosine(37) in tRNA + S-adenosyl-L-homocysteine + H(+). Its function is as follows. Specifically methylates guanosine-37 in various tRNAs. The polypeptide is tRNA (guanine-N(1)-)-methyltransferase (Lachnospira eligens (strain ATCC 27750 / DSM 3376 / VPI C15-48 / C15-B4) (Eubacterium eligens)).